The sequence spans 216 residues: MDRKDKARKNFSSSSSSSAASMAALAAAAAAGDGGAALPSPMEEDKKPRLVASSLAPVAGGGGGGSSSSAAVAAGASSSSSSSSVAAAARRGAGRAGGGAPSGGGGGPRCQVERCGVDLSEAGRYNRRHKVCQTHSKEPVVLVAGLRQRFCQQCSRFHELTEFDDAKRSCRRRLAGHNERRRKSAADTAHGENCRHADQDAGRSHQGTGNPPFQIR.

The disordered stretch occupies residues 32-110 (GDGGAALPSP…PSGGGGGPRC (79 aa)). Low complexity predominate over residues 67–91 (SSSAAVAAGASSSSSSSSVAAAARR). Over residues 94–108 (GRAGGGAPSGGGGGP) the composition is skewed to gly residues. The SBP-type zinc-finger motif lies at 107–184 (GPRCQVERCG…AGHNERRRKS (78 aa)). Zn(2+)-binding residues include cysteine 110, cysteine 115, cysteine 132, histidine 135, cysteine 151, cysteine 154, histidine 158, and cysteine 170. The Bipartite nuclear localization signal signature appears at 167 to 183 (KRSCRRRLAGHNERRRK). The disordered stretch occupies residues 175 to 216 (AGHNERRRKSAADTAHGENCRHADQDAGRSHQGTGNPPFQIR). Residues 189-203 (AHGENCRHADQDAGR) are compositionally biased toward basic and acidic residues. Positions 205 to 216 (HQGTGNPPFQIR) are enriched in polar residues.

Ubiquitous.

It localises to the nucleus. In terms of biological role, trans-acting factor that binds specifically to the consensus nucleotide sequence 5'-TNCGTACAA-3'. May be involved in panicle development. This Oryza sativa subsp. japonica (Rice) protein is Squamosa promoter-binding-like protein 13 (SPL13).